A 445-amino-acid chain; its full sequence is Alpha-1,3-mannosyl-glycoprotein 2-beta-N-acetylglucosaminyltransferase (445 aa).

The Cytoplasmic segment spans residues Met1–Ser6. Residues Ala7–Trp29 traverse the membrane as a helical; Signal-anchor for type II membrane protein segment. Over Thr30–Asn445 the chain is Lumenal. The cysteines at positions 113 and 143 are disulfide-linked. Residues Arg115, Asp142, His188, and Asp210 each contribute to the substrate site. Asp211 provides a ligand contact to Mn(2+). The cysteines at positions 237 and 303 are disulfide-linked. Asp289 (proton acceptor) is an active-site residue. Ser320 provides a ligand contact to substrate.

Belongs to the glycosyltransferase 13 family. Interacts with MGAT4D. Interacts with BRI3 (isoforms 1 and 2); the interaction with isoform 2 is weaker than with isoform 1. The cofactor is Mn(2+).

The protein resides in the golgi apparatus membrane. It is found in the cytoplasm. The protein localises to the perinuclear region. The catalysed reaction is N(4)-(alpha-D-Man-(1-&gt;3)-[alpha-D-Man-(1-&gt;3)-[alpha-D-Man-(1-&gt;6)]-alpha-D-Man-(1-&gt;6)]-beta-D-Man-(1-&gt;4)-beta-D-GlcNAc-(1-&gt;4)-beta-D-GlcNAc)-L-asparaginyl-[protein] (N-glucan mannose isomer 5A1,2) + UDP-N-acetyl-alpha-D-glucosamine = N(4)-{beta-D-GlcNAc-(1-&gt;2)-alpha-D-Man-(1-&gt;3)-[alpha-D-Man-(1-&gt;3)-[alpha-D-Man-(1-&gt;6)]-alpha-D-Man-(1-&gt;6)]-beta-D-Man-(1-&gt;4)-beta-D-GlcNAc-(1-&gt;4)-beta-D-GlcNAc}-L-asparaginyl-[protein] + UDP + H(+). It participates in protein modification; protein glycosylation. Initiates complex N-linked carbohydrate formation. Essential for the conversion of high-mannose to hybrid and complex N-glycans. This Homo sapiens (Human) protein is Alpha-1,3-mannosyl-glycoprotein 2-beta-N-acetylglucosaminyltransferase (MGAT1).